The following is a 270-amino-acid chain: Ribosomal RNA small subunit methyltransferase A (270 aa).

S-adenosyl-L-methionine is bound by residues N15, I17, G42, E64, D89, and N108.

The protein belongs to the class I-like SAM-binding methyltransferase superfamily. rRNA adenine N(6)-methyltransferase family. RsmA subfamily.

It is found in the cytoplasm. The catalysed reaction is adenosine(1518)/adenosine(1519) in 16S rRNA + 4 S-adenosyl-L-methionine = N(6)-dimethyladenosine(1518)/N(6)-dimethyladenosine(1519) in 16S rRNA + 4 S-adenosyl-L-homocysteine + 4 H(+). Functionally, specifically dimethylates two adjacent adenosines (A1518 and A1519) in the loop of a conserved hairpin near the 3'-end of 16S rRNA in the 30S particle. May play a critical role in biogenesis of 30S subunits. This chain is Ribosomal RNA small subunit methyltransferase A, found in Anaplasma marginale (strain Florida).